The following is a 647-amino-acid chain: DNA mismatch repair protein MutL (647 aa).

Belongs to the DNA mismatch repair MutL/HexB family.

Functionally, this protein is involved in the repair of mismatches in DNA. It is required for dam-dependent methyl-directed DNA mismatch repair. May act as a 'molecular matchmaker', a protein that promotes the formation of a stable complex between two or more DNA-binding proteins in an ATP-dependent manner without itself being part of a final effector complex. The sequence is that of DNA mismatch repair protein MutL from Bacillus cereus (strain 03BB102).